A 351-amino-acid polypeptide reads, in one-letter code: uncharacterized protein (351 aa).

Mn(2+) contacts are provided by Asp-215, Asp-226, His-290, Glu-319, and Glu-333.

Belongs to the peptidase M24B family. The cofactor is Mn(2+).

This is an uncharacterized protein from Staphylococcus aureus (strain MW2).